The following is a 456-amino-acid chain: Probable glycine dehydrogenase (decarboxylating) subunit 1 (456 aa).

Belongs to the GcvP family. N-terminal subunit subfamily. In terms of assembly, the glycine cleavage system is composed of four proteins: P, T, L and H. In this organism, the P 'protein' is a heterodimer of two subunits.

It catalyses the reaction N(6)-[(R)-lipoyl]-L-lysyl-[glycine-cleavage complex H protein] + glycine + H(+) = N(6)-[(R)-S(8)-aminomethyldihydrolipoyl]-L-lysyl-[glycine-cleavage complex H protein] + CO2. Its function is as follows. The glycine cleavage system catalyzes the degradation of glycine. The P protein binds the alpha-amino group of glycine through its pyridoxal phosphate cofactor; CO(2) is released and the remaining methylamine moiety is then transferred to the lipoamide cofactor of the H protein. The sequence is that of Probable glycine dehydrogenase (decarboxylating) subunit 1 from Legionella pneumophila (strain Lens).